We begin with the raw amino-acid sequence, 641 residues long: Threonine--tRNA ligase (641 aa).

Positions 1–61 (MPAITLPDGS…ADDASVRFIT (61 aa)) constitute a TGS domain. Positions 243 to 536 (DHRRIGREMD…LIEQHAGRFP (294 aa)) are catalytic. Cysteine 336, histidine 387, and histidine 513 together coordinate Zn(2+).

Belongs to the class-II aminoacyl-tRNA synthetase family. In terms of assembly, homodimer. Zn(2+) serves as cofactor.

It localises to the cytoplasm. It catalyses the reaction tRNA(Thr) + L-threonine + ATP = L-threonyl-tRNA(Thr) + AMP + diphosphate + H(+). In terms of biological role, catalyzes the attachment of threonine to tRNA(Thr) in a two-step reaction: L-threonine is first activated by ATP to form Thr-AMP and then transferred to the acceptor end of tRNA(Thr). Also edits incorrectly charged L-seryl-tRNA(Thr). The polypeptide is Threonine--tRNA ligase (Gluconacetobacter diazotrophicus (strain ATCC 49037 / DSM 5601 / CCUG 37298 / CIP 103539 / LMG 7603 / PAl5)).